The chain runs to 267 residues: 4-hydroxy-tetrahydrodipicolinate reductase (267 aa).

Residues 8–13 (GAAGRM) and glutamate 34 each bind NAD(+). Position 35 (arginine 35) interacts with NADP(+). NAD(+) contacts are provided by residues 98–100 (GST) and 122–125 (APNM). The Proton donor/acceptor role is filled by histidine 155. Histidine 156 provides a ligand contact to (S)-2,3,4,5-tetrahydrodipicolinate. Lysine 159 functions as the Proton donor in the catalytic mechanism. 165-166 (GT) is a (S)-2,3,4,5-tetrahydrodipicolinate binding site.

It belongs to the DapB family.

The protein localises to the cytoplasm. It carries out the reaction (S)-2,3,4,5-tetrahydrodipicolinate + NAD(+) + H2O = (2S,4S)-4-hydroxy-2,3,4,5-tetrahydrodipicolinate + NADH + H(+). It catalyses the reaction (S)-2,3,4,5-tetrahydrodipicolinate + NADP(+) + H2O = (2S,4S)-4-hydroxy-2,3,4,5-tetrahydrodipicolinate + NADPH + H(+). The protein operates within amino-acid biosynthesis; L-lysine biosynthesis via DAP pathway; (S)-tetrahydrodipicolinate from L-aspartate: step 4/4. In terms of biological role, catalyzes the conversion of 4-hydroxy-tetrahydrodipicolinate (HTPA) to tetrahydrodipicolinate. This is 4-hydroxy-tetrahydrodipicolinate reductase from Geobacter sp. (strain M21).